Reading from the N-terminus, the 453-residue chain is MWSPEREAEAPAGGDPAGLLPPEWEEDEERMSFLFSAFKRSREVNSTDWDSKMGFWAPLVLSHSRRQGVVRLRLRDLQEAFQRKGSVPLGLATVLQDLLRRGELQRESDFMASVDSSWISWGVGVFLLKPLKWTLSNMLGDNKVPAEEVLVAVELLKEKAEEVYRLYQNSPLSSHPVVALSELSTLCANSCPDERTFYLVLLQLQKEKRVTVLEQNGEKIVKFARGPRAKVSPVNDVDVGVYQLMQSEQLLSRKVESLSQEAERCKEEARRACRAGKKQLALRSLKAKQRTEKRIEALHAKLDTVQGILDRIYASQTDQMVFNAYQAGVGALKLSMKDVTVEKAESLVDQIQELCDTQDEVSQTLAGGVTNGLDFDSEELEKELDILLQDTTKEPLDLPDNPRNRHFTNSVPNPRISDAELEAELEKLSLSEGGLVPSSKSPKRQLEPTLKPL.

The disordered stretch occupies residues 1 to 22 (MWSPEREAEAPAGGDPAGLLPP). Low complexity predominate over residues 10–22 (APAGGDPAGLLPP). The residue at position 232 (serine 232) is a Phosphoserine. A coiled-coil region spans residues 243–312 (QLMQSEQLLS…DTVQGILDRI (70 aa)). The span at 392 to 403 (TKEPLDLPDNPR) shows a compositional bias: basic and acidic residues. Disordered stretches follow at residues 392-417 (TKEPLDLPDNPRNRHFTNSVPNPRIS) and 431-453 (SEGGLVPSSKSPKRQLEPTLKPL). Threonine 408 is modified (phosphothreonine). Phosphoserine is present on residues serine 410, serine 417, serine 431, and serine 441.

The protein belongs to the SNF7 family. Interacts with CHMP4B, but not with VPS25. Interacts with LEMD2 (via C-terminus).

The protein resides in the cytoplasm. Its subcellular location is the nucleus envelope. Its function is as follows. ESCRT-III-like protein required to recruit the ESCRT-III complex to the nuclear envelope (NE) during late anaphase. Together with SPAST, the ESCRT-III complex promotes NE sealing and mitotic spindle disassembly during late anaphase. Recruited to the reforming NE during anaphase by LEMD2. Plays a role in the endosomal sorting pathway. The chain is Charged multivesicular body protein 7 (CHMP7) from Homo sapiens (Human).